The sequence spans 162 residues: Large ribosomal subunit protein uL10 (162 aa).

The protein belongs to the universal ribosomal protein uL10 family. Part of the ribosomal stalk of the 50S ribosomal subunit. The N-terminus interacts with L11 and the large rRNA to form the base of the stalk. The C-terminus forms an elongated spine to which L12 dimers bind in a sequential fashion forming a multimeric L10(L12)X complex.

In terms of biological role, forms part of the ribosomal stalk, playing a central role in the interaction of the ribosome with GTP-bound translation factors. The protein is Large ribosomal subunit protein uL10 of Borrelia garinii subsp. bavariensis (strain ATCC BAA-2496 / DSM 23469 / PBi) (Borreliella bavariensis).